The sequence spans 173 residues: Flavodoxin 2 (173 aa).

A Flavodoxin-like domain is found at 3–165 (MGLFYGSSTC…RIQTWCEQIL (163 aa)).

It belongs to the flavodoxin family. It depends on FMN as a cofactor.

Functionally, low-potential electron donor to a number of redox enzymes. The polypeptide is Flavodoxin 2 (fldB) (Salmonella typhi).